Consider the following 117-residue polypeptide: Large ribosomal subunit protein bL19 (117 aa).

The protein belongs to the bacterial ribosomal protein bL19 family.

This protein is located at the 30S-50S ribosomal subunit interface and may play a role in the structure and function of the aminoacyl-tRNA binding site. This is Large ribosomal subunit protein bL19 from Phocaeicola vulgatus (strain ATCC 8482 / DSM 1447 / JCM 5826 / CCUG 4940 / NBRC 14291 / NCTC 11154) (Bacteroides vulgatus).